A 440-amino-acid chain; its full sequence is Actin-like protein 7A (440 aa).

Residues 1 to 29 are disordered; that stretch reads MSLDGVWAPQTANIGDGPAKKASDQASMQ. A required for interaction with TES region spans residues 36–56; that stretch reads ASLKDGPAKRAVWVRRDNAET.

Belongs to the actin family. In terms of assembly, interacts (via N-terminus) with TES (via LIM domain 2). Heterodimer with TES; the heterodimer interacts with ENAH to form a heterotrimer. Interacts with ACTL9. Interacts with CYLC1; the interaction may be relevant for proper acrosome attachment to the nuclear envelope. As to expression, detected in testis. Detected at the acrosome of round spermatids (at protein level). Detected in adult and embryonic testis. Detected in developing male germ cells.

The protein localises to the cytoplasm. It is found in the cytoskeleton. Its subcellular location is the golgi apparatus. The protein resides in the nucleus. It localises to the cytoplasmic vesicle. The protein localises to the secretory vesicle. It is found in the acrosome. In terms of biological role, essential for normal spermatogenesis and male fertility. Required for normal sperm head morphology, acroplaxome formation, acrosome attachment, and acrosome granule stability. May anchor and stabilize acrosomal adherence to the acroplaxome at least in part by facilitating the presence of F-actin in the subacrosomal space. May play an important role in formation and fusion of Golgi-derived vesicles during acrosome biogenesis. This Mus musculus (Mouse) protein is Actin-like protein 7A (Actl7a).